We begin with the raw amino-acid sequence, 167 residues long: Pathogenesis-related protein PR-1 type (167 aa).

The first 29 residues, 1–29, serve as a signal peptide directing secretion; it reads MAHNHWCNLFSVALVCVVALVMVQYSVAQ. The region spanning 36 to 155 is the SCP domain; it reads VDAHNAARSA…NGAWFITCNY (120 aa). Cystine bridges form between Cys72-Cys144, Cys117-Cys123, and Cys139-Cys153.

Belongs to the CRISP family.

Probably involved in the defense reaction of plants against pathogens. This Sambucus nigra (European elder) protein is Pathogenesis-related protein PR-1 type.